The following is a 122-amino-acid chain: Probable transcription factor PqrA (122 aa).

In terms of domain architecture, HTH araC/xylS-type spans 7 to 107 (NDILKWLETQ…NTTPAKFREN (101 aa)). 2 DNA-binding regions (H-T-H motif) span residues 26–47 (DTIANKSGYSKWHLQRIFKDFK) and 74–97 (ILDIALMYGFSSQATFTRIFKKHF).

Its function is as follows. Upon expression in E.coli strain KY2563 confers resistance to antibiotics ofloxacin, ciprofloxacin, tetracycline, chloramphenicol, and ceftazidime (increases minimal inhibitory concentration by 8-32 times); also decreases expression of OmpF. In Proteus vulgaris, this protein is Probable transcription factor PqrA.